A 31-amino-acid polypeptide reads, in one-letter code: Cytochrome b6-f complex subunit 6 (31 aa).

Residues 3 to 23 (TITSYFGFLLAVLTITSGLFI) traverse the membrane as a helical segment.

It belongs to the PetL family. The 4 large subunits of the cytochrome b6-f complex are cytochrome b6, subunit IV (17 kDa polypeptide, PetD), cytochrome f and the Rieske protein, while the 4 small subunits are PetG, PetL, PetM and PetN. The complex functions as a dimer.

The protein resides in the plastid. It is found in the chloroplast thylakoid membrane. Functionally, component of the cytochrome b6-f complex, which mediates electron transfer between photosystem II (PSII) and photosystem I (PSI), cyclic electron flow around PSI, and state transitions. PetL is important for photoautotrophic growth as well as for electron transfer efficiency and stability of the cytochrome b6-f complex. The polypeptide is Cytochrome b6-f complex subunit 6 (Lotus japonicus (Lotus corniculatus var. japonicus)).